The sequence spans 96 residues: MNTFLLLLTISLLVVVQIQTGDLGQNSTAVTTPANKAATTAAATTKAAATTATKTTTAVRKTPGKPPKAGASSITDVGACTFLFFANTLMCLFYLS.

Positions 1–23 (MNTFLLLLTISLLVVVQIQTGDL) are cleaved as a signal peptide. Asn-26 carries an N-linked (GlcNAc...) asparagine glycan. Gly-70 is lipidated: GPI-anchor amidated glycine. A propeptide spans 71–96 (ASSITDVGACTFLFFANTLMCLFYLS) (removed in mature form).

It is found in the cell membrane. Its function is as follows. May play a role in carrying and orienting carbohydrate, as well as having a more specific role. The protein is CAMPATH-1 antigen (Cd52) of Rattus norvegicus (Rat).